A 629-amino-acid chain; its full sequence is tRNA uridine 5-carboxymethylaminomethyl modification enzyme MnmG (629 aa).

FAD is bound at residue 13-18 (GGGHAG). 273–287 (GPRYCPSIEDKVVRF) is an NAD(+) binding site.

Belongs to the MnmG family. As to quaternary structure, homodimer. Heterotetramer of two MnmE and two MnmG subunits. FAD is required as a cofactor.

It is found in the cytoplasm. Functionally, NAD-binding protein involved in the addition of a carboxymethylaminomethyl (cmnm) group at the wobble position (U34) of certain tRNAs, forming tRNA-cmnm(5)s(2)U34. This is tRNA uridine 5-carboxymethylaminomethyl modification enzyme MnmG from Nitrosococcus oceani (strain ATCC 19707 / BCRC 17464 / JCM 30415 / NCIMB 11848 / C-107).